Reading from the N-terminus, the 552-residue chain is Cytochrome P450 monooxyhenase eriI (552 aa).

A helical transmembrane segment spans residues F9 to V26. N50 and N447 each carry an N-linked (GlcNAc...) asparagine glycan. C495 lines the heme pocket.

The protein belongs to the cytochrome P450 family. It depends on heme as a cofactor.

The protein resides in the membrane. The catalysed reaction is (-)-cyatha-3,12-diene + reduced [NADPH--hemoprotein reductase] + O2 = erinacol + oxidized [NADPH--hemoprotein reductase] + H2O + H(+). It participates in secondary metabolite biosynthesis. Its function is as follows. Cytochrome P450 monooxygenase; part of the gene cluster that mediates the biosynthesis of erinacines, cyathane-xylosides that show unique biological activities, including leishmanicidal activity, stimulating activity for nerve growth-factor synthesis, and agonistic activity toward the kappa opioid receptor. Within the pathway, eriI hydroxylates cyatha-3,12-diene at C-14 of the seven-membered ring to yield erinacol. The first step of the erinacines biosynthesis pathway is catalyzed by the geranylgeranyl diphosphate (GGPP) synthase eriE via conversion of farnesyl pyrophosphate and isopentyl pyrophosphate into geranylgeranyl pyrophosphate (GGPP). GGPP is then substrate of the diterpene cyclase eriG for the production of cyatha-3,12-diene. The cytochrome P450 monooxygenase eriI then hydroxylates cyatha-3,12-diene at C-14 of the seven-membered ring to produce erinacol, which is further hydroxylated at C-15 by the cytochrome P450 monooxygenase eriC to yield cyathadiol. The cytochrome P450 monooxygenase eriA then catalyzes C-11 hydroxylation in the presence of the short chain dehydrogenase/reductase (SDR) eriH, which leads to the production of cyathatriol. The acetyltransferase eriL converts cyathatriol into 11-O-acetyl-cyathatriol. The SDR eriH catalyzes further oxidation of 11-O-acetyl-cyathatriol into 1-O-acetylcyathin A3. Finally, the glycosyl transferase eriJ tranfers xylose from UDP-xylose onto C-14 of 11-O-acetyl-cyathatriol to form eracine Q. EriJ is also able to convert 11-O-acetyl-cyathatriol to eracine Q2 by using UDP-D-glucose as cosubstrate, but at a lower rate. Cytochrome P450 monooxygenase; part of the gene cluster that mediates the biosynthesis of erinacines, cyathane-xylosides that show unique biological activities, including leishmanicidal activity, stimulating activity for nerve growth-factor synthesis, and agonistic activity toward the kappa opioid receptor. The geranylgeranyl diphosphate (GGPP) synthase eriE catalyzes the first step in erinacines biosynthesis via conversion of farnesyl pyrophosphate and isopentyl pyrophosphate into geranylgeranyl pyrophosphate (GGPP). GGPP is then substrate of the diterpene cyclase eriG for the production of cyatha-3,12-diene. EriG is unable to use geranyl diphosphate (GPP) or farnesyl diphosphate (FPP) as substrates. The cytochrome P450 monooxygenase eriI then hydroxylates cyatha-3,12-diene at C-14 of the seven-membered ring to produce erinacol, which is further hydroxylated at C-15 by the cytochrome P450 monooxygenase eriC to yield cyathadiol. The cytochrome P450 monooxygenase eriA then catalyzes C-11 hydroxylation in the presence of the short chain dehydrogenase/reductase (SDR) eriH, which leads to the production of cyathatriol. The acetyltransferase eriL converts cyathatriol into 11-O-acetyl-cyathatriol. The SDR eriH catalyzes further oxidation of 11-O-acetyl-cyathatriol into 1-O-acetylcyathin A3. Finally, the glycosyl transferase eriJ tranfers xylose from UDP-xylose onto C-14 of 11-O-acetyl-cyathatriol to form eracine Q. EriJ is also able to convert 11-O-acetyl-cyathatriol to eracine Q2 by using UDP-D-glucose as cosubstrate, but at a lower rate. In the absence of eriL and eriJ, the SDR eriH is able to convert cyathatriol to cyathin A3; this is likely a switching mechanism in the biosynthesis of cyathins (C-14 ketogroup)and erinacines (C-14 glycosylated group). The roles of the SDR eriB, the polyprenyl transferase eriF and the dehydrogenase eriK have still to be identified. The protein is Cytochrome P450 monooxyhenase eriI of Hericium erinaceus (Lion's mane mushroom).